The chain runs to 282 residues: NADPH-dependent 7-cyano-7-deazaguanine reductase (282 aa).

88-90 contributes to the substrate binding site; that stretch reads IES. Position 90-91 (90-91) interacts with NADPH; it reads SK. Cysteine 190 serves as the catalytic Thioimide intermediate. Catalysis depends on aspartate 197, which acts as the Proton donor. 229–230 provides a ligand contact to substrate; that stretch reads HE. 258 to 259 contributes to the NADPH binding site; sequence RG.

Belongs to the GTP cyclohydrolase I family. QueF type 2 subfamily. Homodimer.

It localises to the cytoplasm. The enzyme catalyses 7-aminomethyl-7-carbaguanine + 2 NADP(+) = 7-cyano-7-deazaguanine + 2 NADPH + 3 H(+). The protein operates within tRNA modification; tRNA-queuosine biosynthesis. Catalyzes the NADPH-dependent reduction of 7-cyano-7-deazaguanine (preQ0) to 7-aminomethyl-7-deazaguanine (preQ1). The polypeptide is NADPH-dependent 7-cyano-7-deazaguanine reductase (Shigella flexneri serotype 5b (strain 8401)).